We begin with the raw amino-acid sequence, 279 residues long: Probable endonuclease 4 (279 aa).

Residues histidine 66, histidine 106, glutamate 142, aspartate 176, histidine 179, histidine 213, aspartate 226, histidine 228, and glutamate 258 each contribute to the Zn(2+) site.

It belongs to the AP endonuclease 2 family. The cofactor is Zn(2+).

It carries out the reaction Endonucleolytic cleavage to 5'-phosphooligonucleotide end-products.. Its function is as follows. Endonuclease IV plays a role in DNA repair. It cleaves phosphodiester bonds at apurinic or apyrimidinic (AP) sites, generating a 3'-hydroxyl group and a 5'-terminal sugar phosphate. In Photobacterium profundum (strain SS9), this protein is Probable endonuclease 4.